Consider the following 31-residue polypeptide: Cytochrome b6-f complex subunit 6 (31 aa).

A helical transmembrane segment spans residues 4–24; the sequence is LLSYFGLLLAALISTLVLFIG.

The protein belongs to the PetL family. The 4 large subunits of the cytochrome b6-f complex are cytochrome b6, subunit IV (17 kDa polypeptide, PetD), cytochrome f and the Rieske protein, while the 4 small subunits are PetG, PetL, PetM and PetN. The complex functions as a dimer.

It localises to the plastid. It is found in the chloroplast thylakoid membrane. Component of the cytochrome b6-f complex, which mediates electron transfer between photosystem II (PSII) and photosystem I (PSI), cyclic electron flow around PSI, and state transitions. PetL is important for photoautotrophic growth as well as for electron transfer efficiency and stability of the cytochrome b6-f complex. This Psilotum nudum (Whisk fern) protein is Cytochrome b6-f complex subunit 6.